The primary structure comprises 281 residues: N-methyltransferase tcpN (281 aa).

The protein belongs to the methyltransferase superfamily. LaeA methyltransferase family.

It participates in secondary metabolite biosynthesis. Functionally, N-methyltransferase; part of the gene cluster that mediates the biosynthesis of an unusual class of epipolythiodioxopiperazines (ETPs) lacking the reactive thiol group important for toxicity. Firstly, L-tyrosine is prenylated by tcpD, before undergoing condensation with L-glycine in a reaction catalyzed by the NRPS tcpP leading to the diketopiperazine (DKP) backbone. Afterwards the alpha-carbon of tyrosine is oxidized by the cytochrome P450 tcpC to form a hydroxyl group. However, in contrast other ETP biosynthesis pathways studied so far, tcpC is not able to bishydroxylate the DKP at both alpha-carbon positions, but hydroxylates the alpha-carbon of the tyrosine part and the nitrogen of the glycine part. The next steps involve an alpha,beta-elimination reaction catalyzed by tcpI, a methylation by the methyltransferase tcpN the action of the four enzyme cascade tcpG/K/J/I. Due to a dysfunctional cytochrome P450 monooxygenase tcpC, the pathway leads to the biosynthesis of probable non-toxic metabolites lacking the reactive thiol group. This is N-methyltransferase tcpN from Claviceps purpurea (strain 20.1) (Ergot fungus).